Here is a 293-residue protein sequence, read N- to C-terminus: Glycine--tRNA ligase alpha subunit (293 aa).

It belongs to the class-II aminoacyl-tRNA synthetase family. Tetramer of two alpha and two beta subunits.

The protein localises to the cytoplasm. The catalysed reaction is tRNA(Gly) + glycine + ATP = glycyl-tRNA(Gly) + AMP + diphosphate. The protein is Glycine--tRNA ligase alpha subunit of Wolinella succinogenes (strain ATCC 29543 / DSM 1740 / CCUG 13145 / JCM 31913 / LMG 7466 / NCTC 11488 / FDC 602W) (Vibrio succinogenes).